A 363-amino-acid polypeptide reads, in one-letter code: Flagellar P-ring protein (363 aa).

The first 20 residues, 1 to 20 (MKKLTLVLFGMLFLASSAHA), serve as a signal peptide directing secretion.

Belongs to the FlgI family. As to quaternary structure, the basal body constitutes a major portion of the flagellar organelle and consists of four rings (L,P,S, and M) mounted on a central rod.

Its subcellular location is the periplasm. The protein resides in the bacterial flagellum basal body. Assembles around the rod to form the L-ring and probably protects the motor/basal body from shearing forces during rotation. The chain is Flagellar P-ring protein from Vibrio atlanticus (strain LGP32) (Vibrio splendidus (strain Mel32)).